A 333-amino-acid polypeptide reads, in one-letter code: tRNA-modifying protein YgfZ (333 aa).

The folate site is built by Trp-33 and Trp-195.

It belongs to the tRNA-modifying YgfZ family.

It is found in the cytoplasm. Folate-binding protein involved in regulating the level of ATP-DnaA and in the modification of some tRNAs. It is probably a key factor in regulatory networks that act via tRNA modification, such as initiation of chromosomal replication. This Pectobacterium carotovorum subsp. carotovorum (strain PC1) protein is tRNA-modifying protein YgfZ.